The chain runs to 253 residues: Diphthine synthase (253 aa).

S-adenosyl-L-methionine contacts are provided by residues Asp83, Leu86, 111–112 (SI), Leu163, and Leu205.

This sequence belongs to the diphthine synthase family. In terms of assembly, homodimer.

It carries out the reaction 2-[(3S)-amino-3-carboxypropyl]-L-histidyl-[translation elongation factor 2] + 3 S-adenosyl-L-methionine = diphthine-[translation elongation factor 2] + 3 S-adenosyl-L-homocysteine + 3 H(+). The protein operates within protein modification; peptidyl-diphthamide biosynthesis. S-adenosyl-L-methionine-dependent methyltransferase that catalyzes the trimethylation of the amino group of the modified target histidine residue in translation elongation factor 2 (EF-2), to form an intermediate called diphthine. The three successive methylation reactions represent the second step of diphthamide biosynthesis. The chain is Diphthine synthase from Pyrobaculum neutrophilum (strain DSM 2338 / JCM 9278 / NBRC 100436 / V24Sta) (Thermoproteus neutrophilus).